The primary structure comprises 432 residues: Ornithine decarboxylase, chloroplastic (432 aa).

Lys-95 is subject to N6-(pyridoxal phosphate)lysine. Pyridoxal 5'-phosphate-binding positions include Ser-227, Gly-265, and 298–301; that span reads EPGR. A substrate-binding site is contributed by 341–342; sequence YD. Cys-377 functions as the Proton donor; shared with dimeric partner in the catalytic mechanism. Residue Asp-378 participates in substrate binding. Position 406 (Tyr-406) interacts with pyridoxal 5'-phosphate.

This sequence belongs to the Orn/Lys/Arg decarboxylase class-II family. In terms of assembly, homodimer. Only the dimer is catalytically active, as the active sites are constructed of residues from both monomers. Requires pyridoxal 5'-phosphate as cofactor.

It is found in the plastid. Its subcellular location is the chloroplast. It catalyses the reaction L-lysine + H(+) = cadaverine + CO2. The enzyme catalyses L-ornithine + H(+) = putrescine + CO2. Its pathway is alkaloid biosynthesis; nicotine biosynthesis. It functions in the pathway amine and polyamine biosynthesis; putrescine biosynthesis via L-ornithine pathway; putrescine from L-ornithine: step 1/1. Repressed by alpha-difluoromethylornithine (DFMO), 5,5'-dithiobis-(2-nitrobenzoic acid) (DTNB) and salicylaldehyde. Functionally, involved in the biosynthesis of pyridine alkaloid natural products, leading mainly to the production of anabasine, anatabine, nicotine and nornicotine, effective deterrents against herbivores with antiparasitic and pesticide properties (neurotoxins); nornicotine serves as the precursor in the synthesis of the carcinogen compound N'-nitrosonornicotine (NNN). Catalyzes the first and rate-limiting step of polyamine biosynthesis that converts ornithine into putrescine, which is the precursor for the polyamines, spermidine and spermine. Can also use, with a lower efficiency, L-lysine as substrate to produce cadaverine. Polyamines are essential for cell proliferation and are implicated in cellular processes, ranging from DNA replication to apoptosis. The chain is Ornithine decarboxylase, chloroplastic from Nicotiana glutinosa (Tobacco).